Reading from the N-terminus, the 23-residue chain is Aldehyde dehydrogenase (23 aa).

The protein belongs to the aldehyde dehydrogenase family.

It catalyses the reaction an aldehyde + NAD(+) + H2O = a carboxylate + NADH + 2 H(+). The protein is Aldehyde dehydrogenase of Moraxella sp. (strain TAE123).